Here is a 626-residue protein sequence, read N- to C-terminus: tRNA uridine 5-carboxymethylaminomethyl modification enzyme MnmG (626 aa).

FAD is bound at residue 14–19 (GAGHAG). Position 273-287 (273-287 (GPRYCPSIEDKVVRF)) interacts with NAD(+).

This sequence belongs to the MnmG family. Homodimer. Heterotetramer of two MnmE and two MnmG subunits. It depends on FAD as a cofactor.

It localises to the cytoplasm. NAD-binding protein involved in the addition of a carboxymethylaminomethyl (cmnm) group at the wobble position (U34) of certain tRNAs, forming tRNA-cmnm(5)s(2)U34. This Caldicellulosiruptor saccharolyticus (strain ATCC 43494 / DSM 8903 / Tp8T 6331) protein is tRNA uridine 5-carboxymethylaminomethyl modification enzyme MnmG.